A 358-amino-acid polypeptide reads, in one-letter code: Chondroadherin (358 aa).

The first 20 residues, 1–20, serve as a signal peptide directing secretion; sequence MARVLLLSLVFLAILLPALA. The LRRNT domain occupies 21–50; the sequence is ACPQNCHCHGDLQHVICDKVGLQKIPKVSE. Residues cysteine 22 and cysteine 37 are joined by a disulfide bond. LRR repeat units lie at residues 51–72, 75–96, 99–120, 123–144, 147–168, 171–192, 195–216, 219–240, 244–265, and 268–289; these read TTKL…SFRT, NLVS…AFRG, QLIY…AFDD, ELTY…LLSP, NLFI…AFQG, DLRW…SLDD, NLAK…ALSK, VVEE…AFQS, YLET…AFAG, and TLKH…FPFD. An O-linked (GalNAc...) serine glycan is attached at serine 143. The LRRCT domain occupies 299 to 347; sequence NPWKCTCQLRGLRRWLEAKTSRPDATCSSPAKFKGQRIRDTDALRSCKS. 2 disulfide bridges follow: cysteine 303/cysteine 345 and cysteine 305/cysteine 325. The segment at 321–358 is disordered; that stretch reads PDATCSSPAKFKGQRIRDTDALRSCKSPTKRSKKAGRH. Positions 348 to 358 are enriched in basic residues; the sequence is PTKRSKKAGRH.

Belongs to the small leucine-rich proteoglycan (SLRP) family. SLRP class IV subfamily. As to quaternary structure, mostly monomeric. In terms of tissue distribution, present in femoral head and rib cartilage, as well as in tendon. Detected in bone marrow.

The protein resides in the secreted. It localises to the extracellular space. Its subcellular location is the extracellular matrix. Functionally, promotes attachment of chondrocytes, fibroblasts, and osteoblasts. This binding is mediated (at least for chondrocytes and fibroblasts) by the integrin alpha(2)beta(1). May play an important role in the regulation of chondrocyte growth and proliferation. This is Chondroadherin (Chad) from Rattus norvegicus (Rat).